Here is a 540-residue protein sequence, read N- to C-terminus: Chaperonin GroEL (540 aa).

ATP contacts are provided by residues 29 to 32, 86 to 90, Gly-413, 476 to 478, and Asp-492; these read TLGP, DGTTT, and NAA.

It belongs to the chaperonin (HSP60) family. Forms a cylinder of 14 subunits composed of two heptameric rings stacked back-to-back. Interacts with the co-chaperonin GroES.

Its subcellular location is the cytoplasm. It carries out the reaction ATP + H2O + a folded polypeptide = ADP + phosphate + an unfolded polypeptide.. Together with its co-chaperonin GroES, plays an essential role in assisting protein folding. The GroEL-GroES system forms a nano-cage that allows encapsulation of the non-native substrate proteins and provides a physical environment optimized to promote and accelerate protein folding. This chain is Chaperonin GroEL, found in Streptococcus agalactiae serotype V (strain ATCC BAA-611 / 2603 V/R).